The chain runs to 310 residues: MTTDNQQDTAAAAVPTRSGFVALIGATNAGKSTLINRLVGAKVSIVSHKVQTTRAIVRGIAIHDNAQIVFMDTPGIFKPRRRLDRAMVTTAWGGAKDADLIMLLIDSERGIKGDADTILEGLKDVHQPKVLVLNKVDQVRREDLLKLAAAANEVVAFERTFMISALTGSGCEDVMDYLAERLPEGPWYYPEDQISDLPMRQLAAEITREKLFLRLHQELPYASHVETEKWEERKDGSVRIEQVIYVERDSQKKIALGKGGEAIKAISTAARKEISEILEQPVHLFLFVKVRENWGDDPERFREMGLDFPK.

The Era-type G domain occupies 17–184; the sequence is RSGFVALIGA…MDYLAERLPE (168 aa). Positions 25–32 are G1; the sequence is GATNAGKS. Position 25–32 (25–32) interacts with GTP; the sequence is GATNAGKS. A G2 region spans residues 51–55; the sequence is QTTRA. Residues 72–75 form a G3 region; the sequence is DTPG. GTP-binding positions include 72 to 76 and 134 to 137; these read DTPGI and NKVD. Residues 134 to 137 are G4; the sequence is NKVD. Residues 163–165 form a G5 region; it reads ISA. Positions 215-292 constitute a KH type-2 domain; that stretch reads LHQELPYASH…HLFLFVKVRE (78 aa).

The protein belongs to the TRAFAC class TrmE-Era-EngA-EngB-Septin-like GTPase superfamily. Era GTPase family. In terms of assembly, monomer.

It is found in the cytoplasm. Its subcellular location is the cell inner membrane. Functionally, an essential GTPase that binds both GDP and GTP, with rapid nucleotide exchange. Plays a role in 16S rRNA processing and 30S ribosomal subunit biogenesis and possibly also in cell cycle regulation and energy metabolism. In Sinorhizobium medicae (strain WSM419) (Ensifer medicae), this protein is GTPase Era.